The sequence spans 563 residues: Mitochondrial distribution and morphology protein 34 (563 aa).

The region spanning 1–195 (MAFNFNWSPL…LPAIIHRLSL (195 aa)) is the SMP-LTD domain. 2 disordered regions span residues 298-499 (ERGD…PHTP) and 531-563 (ARRQ…PKAL). Polar residues-rich tracts occupy residues 303–332 (AGTT…FSNR) and 346–357 (SLVNMNSATTGL). Basic residues predominate over residues 365–383 (SRSHPTRKKKNRVVNLRKP). Low complexity predominate over residues 386 to 407 (TESSESGESETASTTAVSEPTV). 2 stretches are compositionally biased toward polar residues: residues 458 to 471 (PSLT…INTQ) and 478 to 488 (YNQSASTSYTP). Residues 531 to 540 (ARRQHDDKTA) are compositionally biased toward basic and acidic residues.

The protein belongs to the MDM34 family. In terms of assembly, component of the ER-mitochondria encounter structure (ERMES) or MDM complex, composed of MMM1, MDM10, MDM12 and MDM34.

The protein resides in the mitochondrion outer membrane. Component of the ERMES/MDM complex, which serves as a molecular tether to connect the endoplasmic reticulum (ER) and mitochondria. Components of this complex are involved in the control of mitochondrial shape and protein biogenesis, and function in nonvesicular lipid trafficking between the ER and mitochondria. MDM34 is required for the interaction of the ER-resident membrane protein MMM1 and the outer mitochondrial membrane-resident beta-barrel protein MDM10. The protein is Mitochondrial distribution and morphology protein 34 of Botryotinia fuckeliana (strain B05.10) (Noble rot fungus).